We begin with the raw amino-acid sequence, 298 residues long: ATP synthase gamma chain (298 aa).

Belongs to the ATPase gamma chain family. In terms of assembly, F-type ATPases have 2 components, CF(1) - the catalytic core - and CF(0) - the membrane proton channel. CF(1) has five subunits: alpha(3), beta(3), gamma(1), delta(1), epsilon(1). CF(0) has three main subunits: a, b and c.

It is found in the cell inner membrane. Produces ATP from ADP in the presence of a proton gradient across the membrane. The gamma chain is believed to be important in regulating ATPase activity and the flow of protons through the CF(0) complex. The chain is ATP synthase gamma chain from Wolinella succinogenes (strain ATCC 29543 / DSM 1740 / CCUG 13145 / JCM 31913 / LMG 7466 / NCTC 11488 / FDC 602W) (Vibrio succinogenes).